The chain runs to 649 residues: Protein arginine N-methyltransferase 5 (649 aa).

The segment at 10–300 (KSESRYCGVE…SPYLDYIAYI (291 aa)) is TIM barrel. The SAM-dependent MTase PRMT-type domain maps to 321-627 (LQSPLQPLMD…CGATKVWYEW (307 aa)). Tyrosine 337 provides a ligand contact to S-adenosyl-L-methionine. Phenylalanine 340 is an a protein binding site. S-adenosyl-L-methionine is bound by residues 346–347 (KY), glutamate 405, and 433–434 (DM). Residues glutamate 449 and glutamate 458 each coordinate a protein. Residues glutamate 449 and glutamate 458 each act as proton donor/acceptor in the active site. The segment at 479–649 (PSSYTSFIEP…SNGRSYWVGL (171 aa)) is beta barrel. The dimerization stretch occupies residues 491–507 (ASKLHNDIKAHKDIAHF).

The protein belongs to the class I-like SAM-binding methyltransferase superfamily. Protein arginine N-methyltransferase family.

The protein resides in the cytoplasm. It catalyses the reaction L-arginyl-[protein] + 2 S-adenosyl-L-methionine = N(omega),N(omega)'-dimethyl-L-arginyl-[protein] + 2 S-adenosyl-L-homocysteine + 2 H(+). In terms of biological role, methylates arginine residues in proteins such as histone H4. In Oryza sativa subsp. japonica (Rice), this protein is Protein arginine N-methyltransferase 5 (PRMT5).